Consider the following 379-residue polypeptide: Salicylate/benzoate carboxyl methyltransferase (379 aa).

Tyrosine 40 is a binding site for S-adenosyl-L-homocysteine. Residue glutamine 47 coordinates salicylate. S-adenosyl-L-homocysteine is bound by residues cysteine 82, asparagine 87, aspartate 119, leucine 120, serine 155, and phenylalanine 156. The salicylate site is built by histidine 176 and tryptophan 177. Residues asparagine 188, aspartate 275, phenylalanine 277, and asparagine 278 each coordinate Mg(2+).

The protein belongs to the methyltransferase superfamily. Type-7 methyltransferase family. SABATH subfamily. In terms of assembly, homodimer. Mg(2+) serves as cofactor. Expressed in flowers and at lower levels in leaves and stems. Hardly detected in roots and siliques. Expressed in the sepals and the leaf trichomes and hydathodes.

The enzyme catalyses benzoate + S-adenosyl-L-methionine = methyl benzoate + S-adenosyl-L-homocysteine. The catalysed reaction is salicylate + S-adenosyl-L-methionine = methyl salicylate + S-adenosyl-L-homocysteine. Methyltransferase involved in the biosynthesis of methylsalicylate in response to stresses. Utilizes salicylic acid (SA) more efficiently than benzoic acid (BA). Can also use anthranilic acid and m-hydroxybenzoic acid as substrate. The sequence is that of Salicylate/benzoate carboxyl methyltransferase (BSMT1) from Arabidopsis thaliana (Mouse-ear cress).